We begin with the raw amino-acid sequence, 328 residues long: DNA-directed RNA polymerase subunit alpha (328 aa).

An alpha N-terminal domain (alpha-NTD) region spans residues 1-233 (MHNSATEFLK…EQLEAFIDLR (233 aa)). The segment at 247–328 (FDPVLLRPVD…WPPVSILKND (82 aa)) is alpha C-terminal domain (alpha-CTD).

This sequence belongs to the RNA polymerase alpha chain family. In terms of assembly, homodimer. The RNAP catalytic core consists of 2 alpha, 1 beta, 1 beta' and 1 omega subunit. When a sigma factor is associated with the core the holoenzyme is formed, which can initiate transcription.

It carries out the reaction RNA(n) + a ribonucleoside 5'-triphosphate = RNA(n+1) + diphosphate. Its function is as follows. DNA-dependent RNA polymerase catalyzes the transcription of DNA into RNA using the four ribonucleoside triphosphates as substrates. The chain is DNA-directed RNA polymerase subunit alpha from Wigglesworthia glossinidia brevipalpis.